Consider the following 152-residue polypeptide: Transcriptional repressor NrdR (152 aa).

A zinc finger lies at 3–34 (CPHCHHNGSRVIDSRPAEDGMSIRRRRECVNC). The region spanning 49-139 (LLVVKKDGTR…VYRQFKDVDA (91 aa)) is the ATP-cone domain.

This sequence belongs to the NrdR family. Zn(2+) is required as a cofactor.

In terms of biological role, negatively regulates transcription of bacterial ribonucleotide reductase nrd genes and operons by binding to NrdR-boxes. The chain is Transcriptional repressor NrdR from Limosilactobacillus fermentum (strain NBRC 3956 / LMG 18251) (Lactobacillus fermentum).